The following is a 154-amino-acid chain: NADPH-dependent 7-cyano-7-deazaguanine reductase (154 aa).

Residues 1-13 (MSVTDVSGLSQLG) show a composition bias toward polar residues. A disordered region spans residues 1–30 (MSVTDVSGLSQLGTKVDTPESPEKAVLEKV). The span at 17-27 (DTPESPEKAVL) shows a compositional bias: basic and acidic residues. C52 functions as the Thioimide intermediate in the catalytic mechanism. The active-site Proton donor is the D59. Residues 74-76 (VES) and 93-94 (HE) contribute to the substrate site.

This sequence belongs to the GTP cyclohydrolase I family. QueF type 1 subfamily.

Its subcellular location is the cytoplasm. The catalysed reaction is 7-aminomethyl-7-carbaguanine + 2 NADP(+) = 7-cyano-7-deazaguanine + 2 NADPH + 3 H(+). Its pathway is tRNA modification; tRNA-queuosine biosynthesis. Catalyzes the NADPH-dependent reduction of 7-cyano-7-deazaguanine (preQ0) to 7-aminomethyl-7-deazaguanine (preQ1). The polypeptide is NADPH-dependent 7-cyano-7-deazaguanine reductase (Agrobacterium fabrum (strain C58 / ATCC 33970) (Agrobacterium tumefaciens (strain C58))).